We begin with the raw amino-acid sequence, 179 residues long: MVKVYIHDNKVDSDYRAPHNSGTELSLDELAKLGVIYKYCANEEEVNEIARQREYKNRDVVNICEGSFKSEAEFNEKLATFYQEHLHEDEEIRYCLEGAGYFDVRDASTPENWIRCLVESGDLLILPPGIYHRFTLTTSNHIKALRLFKDEPKWQAINRSNQADSLPVRKDYIALINQY.

Fe(2+) is bound by residues H85, H87, E91, and H132. Residues H85, H87, E91, and H132 each coordinate Ni(2+).

This sequence belongs to the acireductone dioxygenase (ARD) family. The cofactor is Fe(2+). Ni(2+) is required as a cofactor.

It localises to the cytoplasm. The protein resides in the nucleus. The enzyme catalyses 1,2-dihydroxy-5-(methylsulfanyl)pent-1-en-3-one + O2 = 4-methylsulfanyl-2-oxobutanoate + formate + 2 H(+). It catalyses the reaction 1,2-dihydroxy-5-(methylsulfanyl)pent-1-en-3-one + O2 = 3-(methylsulfanyl)propanoate + CO + formate + 2 H(+). The protein operates within amino-acid biosynthesis; L-methionine biosynthesis via salvage pathway; L-methionine from S-methyl-5-thio-alpha-D-ribose 1-phosphate: step 5/6. Functionally, catalyzes 2 different reactions between oxygen and the acireductone 1,2-dihydroxy-3-keto-5-methylthiopentene (DHK-MTPene) depending upon the metal bound in the active site. Fe-containing acireductone dioxygenase (Fe-ARD) produces formate and 2-keto-4-methylthiobutyrate (KMTB), the alpha-ketoacid precursor of methionine in the methionine recycle pathway. Ni-containing acireductone dioxygenase (Ni-ARD) produces methylthiopropionate, carbon monoxide and formate, and does not lie on the methionine recycle pathway. This Saccharomyces cerevisiae (strain ATCC 204508 / S288c) (Baker's yeast) protein is Acireductone dioxygenase.